We begin with the raw amino-acid sequence, 1179 residues long: Pesticidal crystal protein Cry1Ad (1179 aa).

Belongs to the delta endotoxin family.

In terms of biological role, promotes colloidosmotic lysis by binding to the midgut epithelial cells of many lepidopteran larvae. The polypeptide is Pesticidal crystal protein Cry1Ad (cry1Ad) (Bacillus thuringiensis subsp. aizawai).